The sequence spans 29 residues: Conotoxin Bu17 (29 aa).

Disulfide bonds link cysteine 4/cysteine 19, cysteine 5/cysteine 25, and cysteine 15/cysteine 26. The residue at position 26 (cysteine 26) is a Cysteine amide.

It belongs to the conotoxin M superfamily. As to expression, expressed by the venom duct.

The protein resides in the secreted. This is Conotoxin Bu17 from Conus bullatus (Bubble cone).